Reading from the N-terminus, the 325-residue chain is MAQMTMVQAINDALKSELKRDEDVLVFGEDVGVNGGVFRVTEGLQKEFGEDRVFDTPLAESGIGGLALGLAVTGFRPVMEIQFLGFVYEVFDEVAGQIARTRFRSGGTKPAPVTIRTPFGGGVHTPELHADNLEGILAQSPGLKVVIPSGPYDAKGLLISSIQSNDPVVYLEHMKLYRSFREEVPEEEYKIDIGKANVKKEGNDITLISYGAMVQESLKAAEELEKDGYSVEVIDLRTVQPIDIDTLVASVEKTGRAVVVQEAQRQAGVGAQVAAELAERAILSLEAPIARVAASDTIYPFTQAENVWLPNKKDIIEQAKATLEF.

Glu60 is a binding site for thiamine diphosphate.

In terms of assembly, heterodimer of an alpha and a beta chain. Thiamine diphosphate is required as a cofactor.

It carries out the reaction N(6)-[(R)-lipoyl]-L-lysyl-[protein] + pyruvate + H(+) = N(6)-[(R)-S(8)-acetyldihydrolipoyl]-L-lysyl-[protein] + CO2. Its function is as follows. The pyruvate dehydrogenase complex catalyzes the overall conversion of pyruvate to acetyl-CoA and CO(2). It contains multiple copies of three enzymatic components: pyruvate dehydrogenase (E1), dihydrolipoamide acetyltransferase (E2) and lipoamide dehydrogenase (E3). The sequence is that of Pyruvate dehydrogenase E1 component subunit beta (pdhB) from Staphylococcus epidermidis (strain ATCC 35984 / DSM 28319 / BCRC 17069 / CCUG 31568 / BM 3577 / RP62A).